The sequence spans 113 residues: Large ribosomal subunit protein uL22 (113 aa).

Belongs to the universal ribosomal protein uL22 family. Part of the 50S ribosomal subunit.

This protein binds specifically to 23S rRNA; its binding is stimulated by other ribosomal proteins, e.g. L4, L17, and L20. It is important during the early stages of 50S assembly. It makes multiple contacts with different domains of the 23S rRNA in the assembled 50S subunit and ribosome. In terms of biological role, the globular domain of the protein is located near the polypeptide exit tunnel on the outside of the subunit, while an extended beta-hairpin is found that lines the wall of the exit tunnel in the center of the 70S ribosome. The polypeptide is Large ribosomal subunit protein uL22 (Pelotomaculum thermopropionicum (strain DSM 13744 / JCM 10971 / SI)).